The following is a 267-amino-acid chain: Ribosomal RNA large subunit methyltransferase E (267 aa).

Residues Gly50, Trp52, Asp68, Asp84, and Asp109 each coordinate S-adenosyl-L-methionine. The Proton acceptor role is filled by Lys149. One can recognise a TRAM domain in the interval 196-255; the sequence is PLKIDDKFDVTIKKIGAKGNGIAFVEDFVVFMQDEVKKGENVRIKIVDVKPEFAFAIVIG.

The protein belongs to the class I-like SAM-binding methyltransferase superfamily. RNA methyltransferase RlmE family.

It localises to the cytoplasm. The catalysed reaction is uridine(2552) in 23S rRNA + S-adenosyl-L-methionine = 2'-O-methyluridine(2552) in 23S rRNA + S-adenosyl-L-homocysteine + H(+). In terms of biological role, specifically methylates the uridine in position 2552 of 23S rRNA at the 2'-O position of the ribose in the fully assembled 50S ribosomal subunit. The sequence is that of Ribosomal RNA large subunit methyltransferase E from Methanococcoides burtonii (strain DSM 6242 / NBRC 107633 / OCM 468 / ACE-M).